The sequence spans 61 residues: Photosystem II reaction center protein K (61 aa).

The propeptide occupies 1 to 24; it reads MLNIFNLVCICIHSVLYSSSFFSA. Residues 36-56 traverse the membrane as a helical segment; it reads IVDIMPVIPLLFFLLAFVWQA.

It belongs to the PsbK family. PSII is composed of 1 copy each of membrane proteins PsbA, PsbB, PsbC, PsbD, PsbE, PsbF, PsbH, PsbI, PsbJ, PsbK, PsbL, PsbM, PsbT, PsbX, PsbY, PsbZ, Psb30/Ycf12, at least 3 peripheral proteins of the oxygen-evolving complex and a large number of cofactors. It forms dimeric complexes.

It localises to the plastid. The protein resides in the chloroplast thylakoid membrane. One of the components of the core complex of photosystem II (PSII). PSII is a light-driven water:plastoquinone oxidoreductase that uses light energy to abstract electrons from H(2)O, generating O(2) and a proton gradient subsequently used for ATP formation. It consists of a core antenna complex that captures photons, and an electron transfer chain that converts photonic excitation into a charge separation. In Glycine max (Soybean), this protein is Photosystem II reaction center protein K.